A 1319-amino-acid chain; its full sequence is Girdin homolog (1319 aa).

Residues 6–118 (ENWSHPLAFW…KLLLLLLGCA (113 aa)) enclose the Calponin-homology (CH) domain. 3 coiled-coil regions span residues 141–173 (ELAACIQKLTESDEIVQNLEDFERRKMKETDEV), 218–690 (TSEL…ADLI), and 732–1096 (KRER…KKST). Residues 166–222 (KMKETDEVGGGGGSIEDVDSDDMESSTTSSSNGEIAIKQQDQSFLMSRSTSPTSELR) form a disordered region. Residues 204-222 (QQDQSFLMSRSTSPTSELR) are compositionally biased toward polar residues. Disordered stretches follow at residues 1112-1236 (INRR…SPAH) and 1289-1308 (NVNLPQNPPDLPENSDLKPN). Over residues 1118–1131 (TSNGGSTTEDSSVY) the composition is skewed to polar residues.

It belongs to the CCDC88 family. As to expression, expressed in AQR and PQR gas-sensing neurons in hermaphrodites (at protein level).

It localises to the cytoplasm. The protein resides in the cytoskeleton. The protein localises to the cilium basal body. Its subcellular location is the microtubule organizing center. It is found in the centrosome. It localises to the centriole. Functionally, scaffolding protein that plays a role in ciliogenesis, cilium positioning and dendrite anchoring in sensory amphid neurons including AWB, AWA, AWC, ADL and ASI, the phasmid neurons PHA and PHB and the gas sensing neurons AQR, PQR, URX and BAG. Its role in cilium positioning may be through regulation of the localization of cell adhesion proteins such as the apical junction protein ajm-1, and the ciliary scaffolding protein Rootletin/che-10. Plays a more prominent role in regulating dendrite morphogenesis in AQR than in PQR neurons. Regulates localization of hmr-1 to the distal AQR dendrite. During embryonic elongation, required for the anchoring of URX and BAG dendrites to the presumptive nose. This chain is Girdin homolog, found in Caenorhabditis elegans.